We begin with the raw amino-acid sequence, 556 residues long: Copine-7 (556 aa).

2 consecutive C2 domains span residues 1–128 and 135–262; these read MSGD…TRPL and NAGK…AQWD. Asp168, Asp174, Asp230, Asp232, and Asp238 together coordinate Ca(2+). The region spanning 305–504 is the VWFA domain; sequence HCTVAIDFTA…PALRDIVQFV (200 aa). The tract at residues 536 to 556 is disordered; that stretch reads KDLPPRSLGGQTGEAGPSSAP.

This sequence belongs to the copine family. Ca(2+) is required as a cofactor.

The protein localises to the cytoplasm. Its subcellular location is the nucleus. It is found in the cell membrane. In terms of biological role, calcium-dependent phospholipid-binding protein that may play a role in calcium-mediated intracellular processes. This Rattus norvegicus (Rat) protein is Copine-7.